The following is a 96-amino-acid chain: Co-chaperonin GroES (96 aa).

This sequence belongs to the GroES chaperonin family. As to quaternary structure, heptamer of 7 subunits arranged in a ring. Interacts with the chaperonin GroEL.

The protein resides in the cytoplasm. Together with the chaperonin GroEL, plays an essential role in assisting protein folding. The GroEL-GroES system forms a nano-cage that allows encapsulation of the non-native substrate proteins and provides a physical environment optimized to promote and accelerate protein folding. GroES binds to the apical surface of the GroEL ring, thereby capping the opening of the GroEL channel. This chain is Co-chaperonin GroES, found in Cupriavidus taiwanensis (strain DSM 17343 / BCRC 17206 / CCUG 44338 / CIP 107171 / LMG 19424 / R1) (Ralstonia taiwanensis (strain LMG 19424)).